We begin with the raw amino-acid sequence, 341 residues long: NADH-quinone oxidoreductase subunit H (341 aa).

Transmembrane regions (helical) follow at residues 4–24 (LVNI…LTYF), 38–58 (PSVV…KLLI), 70–90 (ILFI…WAVI), 115–135 (VGVL…IIAG), 161–181 (IGLI…GEMV), 187–207 (MPFW…ISLL), 239–259 (LFFL…TIFF), 275–295 (IPGL…FIWI), and 314–334 (VFLP…LFTG).

This sequence belongs to the complex I subunit 1 family. In terms of assembly, NDH-1 is composed of 14 different subunits. Subunits NuoA, H, J, K, L, M, N constitute the membrane sector of the complex.

The protein resides in the cell membrane. The enzyme catalyses a quinone + NADH + 5 H(+)(in) = a quinol + NAD(+) + 4 H(+)(out). Functionally, NDH-1 shuttles electrons from NADH, via FMN and iron-sulfur (Fe-S) centers, to quinones in the respiratory chain. The immediate electron acceptor for the enzyme in this species is believed to be ubiquinone. Couples the redox reaction to proton translocation (for every two electrons transferred, four hydrogen ions are translocated across the cytoplasmic membrane), and thus conserves the redox energy in a proton gradient. This subunit may bind ubiquinone. This Wolbachia pipientis wMel protein is NADH-quinone oxidoreductase subunit H.